Here is a 559-residue protein sequence, read N- to C-terminus: Poly(U)-binding-splicing factor PUF60 (559 aa).

The inhibits homodimerization stretch occupies residues M1–F516. Residues Q14 and K43 each participate in a glycyl lysine isopeptide (Lys-Gly) (interchain with G-Cter in SUMO2) cross-link. T60 is modified (phosphothreonine). Residues Q77–A559 are inhibits transcriptional repression, interaction with ERCC3 and apoptosis induction. A Glycyl lysine isopeptide (Lys-Gly) (interchain with G-Cter in SUMO2) cross-link involves residue K80. Residue S112 is modified to Phosphoserine. 2 consecutive RRM domains span residues C129–N207 and N226–T304. Residue S244 is modified to Phosphoserine. Residue K251 is modified to N6-acetyllysine. A Phosphothreonine modification is found at T314. Positions K416–Q437 are disordered. K419 is covalently cross-linked (Glycyl lysine isopeptide (Lys-Gly) (interchain with G-Cter in SUMO2)). The span at E427–Q437 shows a compositional bias: basic and acidic residues. K454 carries the post-translational modification N6-acetyllysine. K458 participates in a covalent cross-link: Glycyl lysine isopeptide (Lys-Gly) (interchain with G-Cter in SUMO2). Positions T462–Q549 constitute an RRM 3; atypical domain.

It belongs to the RRM half pint family. Homodimer. Associates with the spliceosome. Found in a complex with RO60 and Y5 RNA. Found in a complex with FUBP1 and far upstream element (FUSE) DNA segment. Interacts directly with ERCC3. Interacts with CDK7 and GTF2H1. Interacts with SRSF11/P54. Does not interact with ERCC3 in xeroderma pigmentosum complementation group B (XPB) cells. Interacts with ARGLU1; interaction may be involved in ARGLU1-mediated modulation of alternative splicing. Isoform 2 is expressed in colonic epithelium and colorectal epithelium cancer (at protein level). Isoform 6 is expressed in colorectal epithelial cancer but below detection level in colonic epithelium. Expressed in heart, brain, placenta, lung, liver, skeletal muscle, kidney, pancreas, spleen, thymus, prostate, testis, ovary, small intestine, colon and peripheral blood leukocytes.

The protein resides in the nucleus. Its function is as follows. DNA- and RNA-binding protein, involved in several nuclear processes such as pre-mRNA splicing, apoptosis and transcription regulation. In association with FUBP1 regulates MYC transcription at the P2 promoter through the core-TFIIH basal transcription factor. Acts as a transcriptional repressor through the core-TFIIH basal transcription factor. Represses FUBP1-induced transcriptional activation but not basal transcription. Decreases ERCC3 helicase activity. Does not repress TFIIH-mediated transcription in xeroderma pigmentosum complementation group B (XPB) cells. Is also involved in pre-mRNA splicing. Promotes splicing of an intron with weak 3'-splice site and pyrimidine tract in a cooperative manner with U2AF2. Involved in apoptosis induction when overexpressed in HeLa cells. Isoform 6 failed to repress MYC transcription and inhibited FIR-induced apoptosis in colorectal cancer. Isoform 6 may contribute to tumor progression by enabling increased MYC expression and greater resistance to apoptosis in tumors than in normal cells. Modulates alternative splicing of several mRNAs. Binds to relaxed DNA of active promoter regions. Binds to the pyrimidine tract and 3'-splice site regions of pre-mRNA; binding is enhanced in presence of U2AF2. Binds to Y5 RNA in association with RO60. Binds to poly(U) RNA. The sequence is that of Poly(U)-binding-splicing factor PUF60 from Homo sapiens (Human).